The primary structure comprises 51 residues: Lantibiotic lacticin-481 (51 aa).

The propeptide occupies 1-24 (MKEQNSFNLLQEVTESELDLILGA). Residues 33–38 (TISHEC) constitute a cross-link (beta-methyllanthionine (Thr-Cys)). 2 cross-links (lanthionine (Ser-Cys)) span residues 35–49 (SHECNMNSWQFVFTC) and 42–50 (SWQFVFTCC). At Thr-48 the chain carries (Z)-2,3-didehydrobutyrine.

Belongs to the type A lantibiotic family. Monomer or homodimer. Post-translationally, maturation of lantibiotics involves the enzymatic conversion of Thr, and Ser into dehydrated AA and the formation of thioether bonds with cysteine. This is followed by membrane translocation and cleavage of the modified precursor. In terms of processing, it is established that the 2,3-didehydrobutyrine is the Z-isomer.

Its function is as follows. Lanthionine-containing peptide antibiotic (lantibiotic) active on Gram-positive bacteria. The bactericidal activity of lantibiotics is based on depolarization of energized bacterial cytoplasmic membranes, initiated by the formation of aqueous transmembrane pores. Lacticin 481 is a broad spectrum bacteriocin exhibiting activity against a wide range of lactic acid bacteria and C.tyrobutyricum. The sequence is that of Lantibiotic lacticin-481 (lctA) from Lactococcus lactis subsp. lactis (Streptococcus lactis).